We begin with the raw amino-acid sequence, 298 residues long: Flavin-dependent thymidylate synthase (298 aa).

The ThyX domain maps to Gly-41–Tyr-251. Residues Thr-87, Arg-110 to Arg-112, and Glu-118 each bind FAD. Residues Gln-107 to Arg-110, Glu-118 to Arg-122, and Arg-190 each bind dUMP. Positions Arg-110 to Ser-120 match the ThyX motif motif. Residues Asp-206–His-208 and His-212 each bind FAD. Arg-217 is a binding site for dUMP. Arg-217 functions as the Involved in ionization of N3 of dUMP, leading to its activation in the catalytic mechanism.

The protein belongs to the thymidylate synthase ThyX family. As to quaternary structure, homotetramer. It depends on FAD as a cofactor.

The catalysed reaction is dUMP + (6R)-5,10-methylene-5,6,7,8-tetrahydrofolate + NADPH + H(+) = dTMP + (6S)-5,6,7,8-tetrahydrofolate + NADP(+). The protein operates within pyrimidine metabolism; dTTP biosynthesis. Catalyzes the reductive methylation of 2'-deoxyuridine-5'-monophosphate (dUMP) to 2'-deoxythymidine-5'-monophosphate (dTMP) while utilizing 5,10-methylenetetrahydrofolate (mTHF) as the methyl donor, and NADPH and FADH(2) as the reductant. The protein is Flavin-dependent thymidylate synthase of Ehrlichia ruminantium (strain Welgevonden).